The sequence spans 240 residues: EF-hand domain-containing protein D2 (240 aa).

A2 carries the post-translational modification N-acetylalanine. S11 is subject to Phosphoserine. The tract at residues R13–A38 is disordered. Residues S74 and S76 each carry the phosphoserine modification. Y83 is modified (phosphotyrosine). 2 consecutive EF-hand domains span residues K92 to P127 and Q128 to G163. Positions 105, 109, 116, 141, 143, 145, 147, and 152 each coordinate Ca(2+). An N6-acetyllysine modification is found at K233.

As to quaternary structure, interacts with CASP9; with inactive form. Found in lymphocytes; preferentially expressed in CD8+ cells.

Its subcellular location is the membrane raft. In terms of biological role, may regulate B-cell receptor (BCR)-induced immature and primary B-cell apoptosis. Plays a role as negative regulator of the canonical NF-kappa-B-activating branch. Controls spontaneous apoptosis through the regulation of BCL2L1 abundance. The sequence is that of EF-hand domain-containing protein D2 (EFHD2) from Homo sapiens (Human).